The primary structure comprises 330 residues: Peroxisomal membrane protein PEX13 (330 aa).

Residues Met1–Pro14 are compositionally biased toward pro residues. The interval Met1–Gln20 is disordered. A helical transmembrane segment spans residues Ala193–Ile213. Residues Ala235–Lys300 form the SH3 domain.

Belongs to the peroxin-13 family. In terms of assembly, interacts with PEX14/prx-14; forming the PEX13-PEX14 docking complex.

It localises to the peroxisome membrane. Functionally, component of the PEX13-PEX14 docking complex, a translocon channel that specifically mediates the import of peroxisomal cargo proteins bound to PEX5/prx-5 receptor. The PEX13-PEX14 docking complex forms a large import pore which can be opened to a diameter of about 9 nm. Mechanistically, PEX5/prx-5 receptor along with cargo proteins associates with the PEX14/prx-14 subunit of the PEX13-PEX14 docking complex in the cytosol, leading to the insertion of the receptor into the organelle membrane with the concomitant translocation of the cargo into the peroxisome matrix. In Caenorhabditis elegans, this protein is Peroxisomal membrane protein PEX13 (prx-13).